Consider the following 278-residue polypeptide: ATP synthase subunit a (278 aa).

A run of 6 helical transmembrane segments spans residues 43–63 (TWHI…LWIF), 104–124 (IAPL…MDMI), 148–168 (DVNI…FYSI), 191–211 (IPVN…SLAL), 222–242 (LIFI…TLGV), and 249–269 (LIFH…LTIV).

The protein belongs to the ATPase A chain family. F-type ATPases have 2 components, CF(1) - the catalytic core - and CF(0) - the membrane proton channel. CF(1) has five subunits: alpha(3), beta(3), gamma(1), delta(1), epsilon(1). CF(0) has three main subunits: a(1), b(2) and c(9-12). The alpha and beta chains form an alternating ring which encloses part of the gamma chain. CF(1) is attached to CF(0) by a central stalk formed by the gamma and epsilon chains, while a peripheral stalk is formed by the delta and b chains.

The protein localises to the cell inner membrane. In terms of biological role, key component of the proton channel; it plays a direct role in the translocation of protons across the membrane. The chain is ATP synthase subunit a from Shewanella baltica (strain OS185).